The following is a 123-amino-acid chain: Ribosome-binding factor A (123 aa).

It belongs to the RbfA family. Monomer. Binds 30S ribosomal subunits, but not 50S ribosomal subunits or 70S ribosomes.

The protein localises to the cytoplasm. Its function is as follows. One of several proteins that assist in the late maturation steps of the functional core of the 30S ribosomal subunit. Associates with free 30S ribosomal subunits (but not with 30S subunits that are part of 70S ribosomes or polysomes). Required for efficient processing of 16S rRNA. May interact with the 5'-terminal helix region of 16S rRNA. In Koribacter versatilis (strain Ellin345), this protein is Ribosome-binding factor A.